We begin with the raw amino-acid sequence, 475 residues long: Ribulose bisphosphate carboxylase large chain (475 aa).

The propeptide occupies 1 to 2 (MS). Residue Pro-3 is modified to N-acetylproline. Lys-14 carries the post-translational modification N6,N6,N6-trimethyllysine. Substrate-binding residues include Asn-123 and Thr-173. Lys-175 functions as the Proton acceptor in the catalytic mechanism. Lys-177 is a substrate binding site. Mg(2+) is bound by residues Lys-201, Asp-203, and Glu-204. Lys-201 is subject to N6-carboxylysine. Catalysis depends on His-294, which acts as the Proton acceptor. 3 residues coordinate substrate: Arg-295, His-327, and Ser-379.

It belongs to the RuBisCO large chain family. Type I subfamily. As to quaternary structure, heterohexadecamer of 8 large chains and 8 small chains; disulfide-linked. The disulfide link is formed within the large subunit homodimers. Mg(2+) is required as a cofactor. The disulfide bond which can form in the large chain dimeric partners within the hexadecamer appears to be associated with oxidative stress and protein turnover.

It is found in the plastid. The protein localises to the chloroplast. It catalyses the reaction 2 (2R)-3-phosphoglycerate + 2 H(+) = D-ribulose 1,5-bisphosphate + CO2 + H2O. The catalysed reaction is D-ribulose 1,5-bisphosphate + O2 = 2-phosphoglycolate + (2R)-3-phosphoglycerate + 2 H(+). Functionally, ruBisCO catalyzes two reactions: the carboxylation of D-ribulose 1,5-bisphosphate, the primary event in carbon dioxide fixation, as well as the oxidative fragmentation of the pentose substrate in the photorespiration process. Both reactions occur simultaneously and in competition at the same active site. The chain is Ribulose bisphosphate carboxylase large chain from Tsuga heterophylla (Western hemlock).